The following is a 309-amino-acid chain: tRNA pseudouridine synthase B (309 aa).

The Nucleophile role is filled by D39.

It belongs to the pseudouridine synthase TruB family. Type 1 subfamily.

The enzyme catalyses uridine(55) in tRNA = pseudouridine(55) in tRNA. Responsible for synthesis of pseudouridine from uracil-55 in the psi GC loop of transfer RNAs. The sequence is that of tRNA pseudouridine synthase B from Bacillus licheniformis (strain ATCC 14580 / DSM 13 / JCM 2505 / CCUG 7422 / NBRC 12200 / NCIMB 9375 / NCTC 10341 / NRRL NRS-1264 / Gibson 46).